We begin with the raw amino-acid sequence, 261 residues long: Putative hydro-lyase SH0274 (261 aa).

This sequence belongs to the D-glutamate cyclase family.

The chain is Putative hydro-lyase SH0274 from Staphylococcus haemolyticus (strain JCSC1435).